Reading from the N-terminus, the 500-residue chain is L-arabinose isomerase (500 aa).

Positions 306, 333, 349, and 448 each coordinate Mn(2+).

This sequence belongs to the arabinose isomerase family. The cofactor is Mn(2+).

The catalysed reaction is beta-L-arabinopyranose = L-ribulose. It participates in carbohydrate degradation; L-arabinose degradation via L-ribulose; D-xylulose 5-phosphate from L-arabinose (bacterial route): step 1/3. Its function is as follows. Catalyzes the conversion of L-arabinose to L-ribulose. This Saccharophagus degradans (strain 2-40 / ATCC 43961 / DSM 17024) protein is L-arabinose isomerase.